The primary structure comprises 142 residues: Large ribosomal subunit protein uL11 (142 aa).

It belongs to the universal ribosomal protein uL11 family. In terms of assembly, part of the ribosomal stalk of the 50S ribosomal subunit. Interacts with L10 and the large rRNA to form the base of the stalk. L10 forms an elongated spine to which L12 dimers bind in a sequential fashion forming a multimeric L10(L12)X complex. Post-translationally, one or more lysine residues are methylated.

Functionally, forms part of the ribosomal stalk which helps the ribosome interact with GTP-bound translation factors. This chain is Large ribosomal subunit protein uL11, found in Hamiltonella defensa subsp. Acyrthosiphon pisum (strain 5AT).